The following is a 207-amino-acid chain: Ribonuclease HII (207 aa).

The RNase H type-2 domain maps to 20–207 (QLFAGVDEVG…KPVKRVLGIE (188 aa)). A divalent metal cation-binding residues include D26, E27, and D118.

Belongs to the RNase HII family. The cofactor is Mn(2+). Mg(2+) is required as a cofactor.

The protein localises to the cytoplasm. The catalysed reaction is Endonucleolytic cleavage to 5'-phosphomonoester.. Its function is as follows. Endonuclease that specifically degrades the RNA of RNA-DNA hybrids. This Aliivibrio salmonicida (strain LFI1238) (Vibrio salmonicida (strain LFI1238)) protein is Ribonuclease HII.